Consider the following 578-residue polypeptide: Vacuolar protein 8 (578 aa).

ARM repeat units follow at residues 58–95, 96–135, 137–176, 178–217, 219–258, 262–301, 303–342, 344–384, and 428–467; these read NRAETDFFRGEPLSALSTLVYSDNVDLQRSASLTFAEI, TERDVREVDRDTLEPILFLLQSSDIEVQRAASAALGNLAV, ADNKVLIVALGGLAPLIRQMMSPNVEVQCNAVGCITNLAT, EDNKAKIARSGALGPLIRLAKSKDMRVQRNATGALLNMTH, DDNRQQLVNAGAIPVLVQLLSSSDVDVQYYCTTALSNIAV, NRKRLAQTESRLVQSLVHLMDSSTPKVQCQAALALRNLAS, EKYQLEIVRAKGLPPLLRLLQSSYLPLILSAVACIRNISI, PLNE…NLAA, and DELKPHLLNLGVFDVLIPLTESESIEVQGNSAAALGNLSS.

This sequence belongs to the beta-catenin family.

The protein localises to the vacuole membrane. Functions in both vacuole inheritance and protein targeting from the cytoplasm to vacuole. The sequence is that of Vacuolar protein 8 (vac8) from Aspergillus oryzae (strain ATCC 42149 / RIB 40) (Yellow koji mold).